The chain runs to 354 residues: Glutamine synthetase (354 aa).

One can recognise a GS beta-grasp domain in the interval 22–101; sequence FHAEYVWIDG…VLSETYNNDG (80 aa). Residues 108 to 354 form the GS catalytic domain; the sequence is HRHHTAKVME…IIIETTILDK (247 aa).

Belongs to the glutamine synthetase family. In terms of assembly, homooctamer.

It is found in the cytoplasm. The enzyme catalyses L-glutamate + NH4(+) + ATP = L-glutamine + ADP + phosphate + H(+). The polypeptide is Glutamine synthetase (GLN1) (Amanita muscaria (Fly agaric)).